Consider the following 41-residue polypeptide: Photosystem II reaction center protein L (41 aa).

A helical membrane pass occupies residues 20–40 (SLYLGLLLVFVVGLLFSSYFL).

The protein belongs to the PsbL family. PSII is composed of 1 copy each of membrane proteins PsbA, PsbB, PsbC, PsbD, PsbE, PsbF, PsbH, PsbI, PsbJ, PsbK, PsbL, PsbM, PsbT, PsbX, PsbY, PsbZ, Psb30/Ycf12, peripheral proteins PsbO, CyanoQ (PsbQ), PsbU, PsbV and a large number of cofactors. It forms dimeric complexes.

It localises to the cellular thylakoid membrane. In terms of biological role, one of the components of the core complex of photosystem II (PSII). PSII is a light-driven water:plastoquinone oxidoreductase that uses light energy to abstract electrons from H(2)O, generating O(2) and a proton gradient subsequently used for ATP formation. It consists of a core antenna complex that captures photons, and an electron transfer chain that converts photonic excitation into a charge separation. This subunit is found at the monomer-monomer interface and is required for correct PSII assembly and/or dimerization. In Synechococcus sp. (strain JA-2-3B'a(2-13)) (Cyanobacteria bacterium Yellowstone B-Prime), this protein is Photosystem II reaction center protein L.